The primary structure comprises 464 residues: Siroheme synthase (464 aa).

Residues M1–L203 form a precorrin-2 dehydrogenase /sirohydrochlorin ferrochelatase region. NAD(+)-binding positions include E22–I23 and P43–Q44. Position 128 is a phosphoserine (S128). Residues G216 to V464 are uroporphyrinogen-III C-methyltransferase. Residue P225 coordinates S-adenosyl-L-methionine. D248 (proton acceptor) is an active-site residue. The active-site Proton donor is the K270. Residues G301–D303, I306, T331–A332, M383, and G412 contribute to the S-adenosyl-L-methionine site.

This sequence in the N-terminal section; belongs to the precorrin-2 dehydrogenase / sirohydrochlorin ferrochelatase family. The protein in the C-terminal section; belongs to the precorrin methyltransferase family.

The catalysed reaction is uroporphyrinogen III + 2 S-adenosyl-L-methionine = precorrin-2 + 2 S-adenosyl-L-homocysteine + H(+). The enzyme catalyses precorrin-2 + NAD(+) = sirohydrochlorin + NADH + 2 H(+). It catalyses the reaction siroheme + 2 H(+) = sirohydrochlorin + Fe(2+). Its pathway is cofactor biosynthesis; adenosylcobalamin biosynthesis; precorrin-2 from uroporphyrinogen III: step 1/1. It functions in the pathway cofactor biosynthesis; adenosylcobalamin biosynthesis; sirohydrochlorin from precorrin-2: step 1/1. It participates in porphyrin-containing compound metabolism; siroheme biosynthesis; precorrin-2 from uroporphyrinogen III: step 1/1. The protein operates within porphyrin-containing compound metabolism; siroheme biosynthesis; siroheme from sirohydrochlorin: step 1/1. Its pathway is porphyrin-containing compound metabolism; siroheme biosynthesis; sirohydrochlorin from precorrin-2: step 1/1. Functionally, multifunctional enzyme that catalyzes the SAM-dependent methylations of uroporphyrinogen III at position C-2 and C-7 to form precorrin-2 via precorrin-1. Then it catalyzes the NAD-dependent ring dehydrogenation of precorrin-2 to yield sirohydrochlorin. Finally, it catalyzes the ferrochelation of sirohydrochlorin to yield siroheme. This Pseudomonas fluorescens (strain SBW25) protein is Siroheme synthase.